Consider the following 337-residue polypeptide: U11/U12 small nuclear ribonucleoprotein 48 kDa protein (337 aa).

A CHHC U11-48K-type zinc finger spans residues 55–82 (IAICPYDSNHRMPKSSLTKHMESCRLRK). Zn(2+) contacts are provided by C58, H64, H74, and C78. Glycyl lysine isopeptide (Lys-Gly) (interchain with G-Cter in SUMO2) cross-links involve residues K87 and K104. The segment covering 255 to 276 (HWQEEQGRAGDAAEKNEERRSA) has biased composition (basic and acidic residues). The segment at 255-337 (HWQEEQGRAG…HSHKRRKQKI (83 aa)) is disordered. Over residues 294–310 (RHRRARSRSPHKRKRNK) the composition is skewed to basic residues. Basic and acidic residues predominate over residues 311–326 (DKSSESRRRKERDGER). The segment covering 327 to 337 (HHSHKRRKQKI) has biased composition (basic residues).

Component of the U11/U12 snRNPs that are part of the U12-type spliceosome. Not found in the major spliceosome.

The protein resides in the nucleus. Its function is as follows. Likely involved in U12-type 5' splice site recognition. This chain is U11/U12 small nuclear ribonucleoprotein 48 kDa protein (Snrnp48), found in Mus musculus (Mouse).